We begin with the raw amino-acid sequence, 190 residues long: Tereporin-Ca1 (190 aa).

The tract at residues 2–21 is N-terminal region; sequence TAGSSLAGTTLSGLAASGYR. Phosphocholine is bound by residues glycine 78, serine 96, proline 98, tyrosine 131, and tyrosine 132. The Cell attachment site, crucial for protein stability motif lies at 138 to 140; sequence KGE.

It belongs to the actinoporin family. Conoidea subfamily. Octamer or nonamer in membranes. Monomer in the soluble state. In terms of tissue distribution, expressed by the venom duct.

The protein resides in the secreted. It localises to the nematocyst. It is found in the target cell membrane. Its function is as follows. Pore-forming protein that forms pores of around 1 nm and causes cardiac stimulation and cytolysis. This chain is Tereporin-Ca1, found in Terebra anilis (Auger snail).